Consider the following 341-residue polypeptide: NADH-quinone oxidoreductase subunit 8 (341 aa).

A run of 8 helical transmembrane segments spans residues 9–29, 75–95, 108–128, 154–174, 180–200, 244–264, 278–298, and 321–341; these read ALIA…LVYA, FIHA…PALI, VGVL…TLAG, MGTA…SAIV, GWAI…IFIV, LFVA…VPFE, VLLG…FAFL, and YLLP…ALFS.

This sequence belongs to the complex I subunit 1 family. NDH-1 is composed of 14 different subunits. Subunits Nqo7-14 constitute the membrane sector of the complex.

It is found in the cell inner membrane. The enzyme catalyses a quinone + NADH + 5 H(+)(in) = a quinol + NAD(+) + 4 H(+)(out). NDH-1 shuttles electrons from NADH, via FMN and iron-sulfur (Fe-S) centers, to quinones in the respiratory chain. The immediate electron acceptor for the enzyme in this species is believed to be menaquinone. Couples the redox reaction to proton translocation (for every two electrons transferred, four hydrogen ions are translocated across the cytoplasmic membrane), and thus conserves the redox energy in a proton gradient. The polypeptide is NADH-quinone oxidoreductase subunit 8 (nqo8) (Rhodothermus marinus (Rhodothermus obamensis)).